The sequence spans 208 residues: Endo-1,4-beta-xylanase B (208 aa).

The N-terminal stretch at 1–16 is a signal peptide; it reads MKVTAAFAGLLATTLA. Residues 17-207 enclose the GH11 domain; that stretch reads APATELVTRS…GTGTASVTVS (191 aa). The active-site Nucleophile is Glu101. Glu194 functions as the Proton donor in the catalytic mechanism.

The protein belongs to the glycosyl hydrolase 11 (cellulase G) family.

It localises to the secreted. The catalysed reaction is Endohydrolysis of (1-&gt;4)-beta-D-xylosidic linkages in xylans.. It functions in the pathway glycan degradation; xylan degradation. Its activity is regulated as follows. N-bromosuccinimide completely inhibits the catalytic activity. In terms of biological role, endo-1,4-beta-xylanase involved in the hydrolysis of xylan, a major structural heterogeneous polysaccharide found in plant biomass representing the second most abundant polysaccharide in the biosphere, after cellulose. The polypeptide is Endo-1,4-beta-xylanase B (xynB) (Talaromyces purpureogenus (Soft rot fungus)).